A 124-amino-acid polypeptide reads, in one-letter code: Galanin peptides (124 aa).

A signal peptide spans 1–19 (MARGSVILLAWLLLVATLS). Positions 20-30 (ATLGLGMPTKE) are excised as a propeptide. A Threonine amide modification is found at T61. S117 and S118 each carry phosphoserine.

Belongs to the galanin family.

The protein resides in the secreted. Endocrine hormone of the central and peripheral nervous systems that binds and activates the G protein-coupled receptors GALR1, GALR2, and GALR3. This small neuropeptide may regulate diverse physiologic functions including contraction of smooth muscle of the gastrointestinal and genitourinary tract, growth hormone and insulin release and adrenal secretion. The chain is Galanin peptides (Gal) from Rattus norvegicus (Rat).